Here is a 38-residue protein sequence, read N- to C-terminus: Photosystem II reaction center protein L (38 aa).

Residues Ser17–Phe37 traverse the membrane as a helical segment.

The protein belongs to the PsbL family. As to quaternary structure, PSII is composed of 1 copy each of membrane proteins PsbA, PsbB, PsbC, PsbD, PsbE, PsbF, PsbH, PsbI, PsbJ, PsbK, PsbL, PsbM, PsbT, PsbX, PsbY, PsbZ, Psb30/Ycf12, at least 3 peripheral proteins of the oxygen-evolving complex and a large number of cofactors. It forms dimeric complexes.

The protein resides in the plastid. The protein localises to the chloroplast thylakoid membrane. In terms of biological role, one of the components of the core complex of photosystem II (PSII). PSII is a light-driven water:plastoquinone oxidoreductase that uses light energy to abstract electrons from H(2)O, generating O(2) and a proton gradient subsequently used for ATP formation. It consists of a core antenna complex that captures photons, and an electron transfer chain that converts photonic excitation into a charge separation. This subunit is found at the monomer-monomer interface and is required for correct PSII assembly and/or dimerization. The chain is Photosystem II reaction center protein L from Pinus thunbergii (Japanese black pine).